We begin with the raw amino-acid sequence, 350 residues long: FAD:protein FMN transferase (350 aa).

Positions 1–19 (MKMTFCRAVCLAAAFLLMG) are cleaved as a signal peptide. A lipid anchor (N-palmitoyl cysteine) is attached at Cys20. Residue Cys20 is the site of S-diacylglycerol cysteine attachment. Residues Met41, Tyr78, 119–121 (AMD), and Asp181 each bind FAD. Residue Thr184 coordinates Mg(2+). 2 residues coordinate FAD: Glu187 and Ile272. Mg(2+)-binding residues include Asp298, Asp301, and Thr302.

Belongs to the ApbE family. As to quaternary structure, homodimer. The cofactor is Mg(2+).

The protein localises to the cell inner membrane. The enzyme catalyses L-threonyl-[protein] + FAD = FMN-L-threonyl-[protein] + AMP + H(+). In terms of biological role, flavin transferase that catalyzes the transfer of the FMN moiety of FAD and its covalent binding to the hydroxyl group of a threonine residue in a target flavoprotein such as NqrB and NqrC, two subunits of the NQR complex. The chain is FAD:protein FMN transferase from Salmonella typhimurium (strain LT2 / SGSC1412 / ATCC 700720).